A 224-amino-acid polypeptide reads, in one-letter code: ATP synthase subunit a (224 aa).

6 helical membrane passes run 17–37 (LSLN…IYWL), 72–92 (IFIS…FPYI), 99–119 (LTLT…YGWI), 125–145 (MFAH…MVCI), 170–190 (LLLT…VTFL), and 195–215 (IALL…FAVL).

The protein belongs to the ATPase A chain family. As to quaternary structure, F-type ATPases have 2 components, CF(1) - the catalytic core - and CF(0) - the membrane proton channel. CF(1) has five subunits: alpha(3), beta(3), gamma(1), delta(1), epsilon(1). CF(0) has three main subunits: a, b and c.

It is found in the mitochondrion inner membrane. Mitochondrial membrane ATP synthase (F(1)F(0) ATP synthase or Complex V) produces ATP from ADP in the presence of a proton gradient across the membrane which is generated by electron transport complexes of the respiratory chain. F-type ATPases consist of two structural domains, F(1) - containing the extramembraneous catalytic core and F(0) - containing the membrane proton channel, linked together by a central stalk and a peripheral stalk. During catalysis, ATP synthesis in the catalytic domain of F(1) is coupled via a rotary mechanism of the central stalk subunits to proton translocation. Key component of the proton channel; it may play a direct role in the translocation of protons across the membrane. The polypeptide is ATP synthase subunit a (mt:ATPase6) (Drosophila simulans (Fruit fly)).